The primary structure comprises 252 residues: Thiazole synthase (252 aa).

The Schiff-base intermediate with DXP role is filled by K91. 1-deoxy-D-xylulose 5-phosphate-binding positions include G152, A179–G180, and N201–T202.

The protein belongs to the ThiG family. As to quaternary structure, homotetramer. Forms heterodimers with either ThiH or ThiS.

It localises to the cytoplasm. The enzyme catalyses [ThiS sulfur-carrier protein]-C-terminal-Gly-aminoethanethioate + 2-iminoacetate + 1-deoxy-D-xylulose 5-phosphate = [ThiS sulfur-carrier protein]-C-terminal Gly-Gly + 2-[(2R,5Z)-2-carboxy-4-methylthiazol-5(2H)-ylidene]ethyl phosphate + 2 H2O + H(+). It functions in the pathway cofactor biosynthesis; thiamine diphosphate biosynthesis. Catalyzes the rearrangement of 1-deoxy-D-xylulose 5-phosphate (DXP) to produce the thiazole phosphate moiety of thiamine. Sulfur is provided by the thiocarboxylate moiety of the carrier protein ThiS. In vitro, sulfur can be provided by H(2)S. In Erwinia pyrifoliae (strain DSM 12162 / Ep1/96), this protein is Thiazole synthase.